The chain runs to 414 residues: V-set and immunoglobulin domain-containing protein 8 (414 aa).

Positions 1-21 are cleaved as a signal peptide; that stretch reads MRVGGAFHLLLVCLSPALLSA. 2 Ig-like V-type domains span residues 22 to 141 and 146 to 257; these read VRIN…VIVT and PAVP…VKVS. The Extracellular segment spans residues 22–263; that stretch reads VRINGDGQEV…VKVSDSRRIG (242 aa). 2 disulfides stabilise this stretch: C44/C126 and C167/C239. Residues 264 to 284 traverse the membrane as a helical segment; sequence VIIGIVLGSLLALGCLAVGIW. Residues 285-414 lie on the Cytoplasmic side of the membrane; the sequence is GLVCCCCGGS…PVQCKNGLLV (130 aa).

It localises to the membrane. The polypeptide is V-set and immunoglobulin domain-containing protein 8 (Homo sapiens (Human)).